Consider the following 183-residue polypeptide: Inner membrane-spanning protein YciB (183 aa).

5 helical membrane-spanning segments follow: residues 19-39 (LYGVQQAAITLVIATVIQLIV), 53-73 (IMGIFVVFFGILTAYFNDLNF), 76-96 (WKVTIINGLFAAVLLVSQFVF), 121-141 (LGWAGFFIICMLLNIVISYYF), and 151-171 (TFGFTGLSLIAAIATGVYLYP).

This sequence belongs to the YciB family.

It is found in the cell inner membrane. Functionally, plays a role in cell envelope biogenesis, maintenance of cell envelope integrity and membrane homeostasis. The polypeptide is Inner membrane-spanning protein YciB (Actinobacillus pleuropneumoniae serotype 7 (strain AP76)).